Reading from the N-terminus, the 207-residue chain is Ion-translocating oxidoreductase complex subunit G (207 aa).

The helical transmembrane segment at 11–31 (GILLGFIALLCTIISAGIFFL) threads the bilayer. At Thr175 the chain carries FMN phosphoryl threonine.

It belongs to the RnfG family. As to quaternary structure, the complex is composed of six subunits: RnfA, RnfB, RnfC, RnfD, RnfE and RnfG. The cofactor is FMN.

The protein localises to the cell inner membrane. Its function is as follows. Part of a membrane-bound complex that couples electron transfer with translocation of ions across the membrane. This is Ion-translocating oxidoreductase complex subunit G from Haemophilus influenzae (strain ATCC 51907 / DSM 11121 / KW20 / Rd).